The sequence spans 400 residues: Na(+)/H(+) antiporter NhaA (400 aa).

11 helical membrane-spanning segments follow: residues 26–46 (AGGI…NSPL), 71–91 (LIHW…GMEV), 107–127 (IFPA…YWFI), 137–157 (GWAI…ALLS), 166–186 (IFLL…IALF), 189–209 (HGLS…LILL), 225–245 (AILW…GVII), 273–293 (FVIL…GIDV), 299–319 (PLLL…IFGF), 340–360 (IFAV…LASL), and 373–393 (LSRL…YLFL).

Belongs to the NhaA Na(+)/H(+) (TC 2.A.33) antiporter family.

It localises to the cell inner membrane. It catalyses the reaction Na(+)(in) + 2 H(+)(out) = Na(+)(out) + 2 H(+)(in). Functionally, na(+)/H(+) antiporter that extrudes sodium in exchange for external protons. This chain is Na(+)/H(+) antiporter NhaA, found in Haemophilus influenzae (strain ATCC 51907 / DSM 11121 / KW20 / Rd).